We begin with the raw amino-acid sequence, 628 residues long: Growth hormone receptor (628 aa).

A signal peptide spans 1-18 (MDLWQLLLTLAVVGSSNA). Over 19-266 (FVGREAVTVT…FTCEEEFQFP (248 aa)) the chain is Extracellular. Residues N33, N40, and N46 are each glycosylated (N-linked (GlcNAc...) asparagine). 2 disulfides stabilise this stretch: C56–C66 and C101–C112. N-linked (GlcNAc...) asparagine glycosylation is present at N115. C126 and C140 are oxidised to a cystine. Residues 151-254 (PPTGLNWTLM…EILYITLPQS (104 aa)) enclose the Fibronectin type-III domain. N156, N161, and N200 each carry an N-linked (GlcNAc...) asparagine glycan. Positions 240–244 (YGEFS) match the WSXWS motif motif. The helical transmembrane segment at 267–287 (WFLIMIFGIFGLTVMLLVVMF) threads the bilayer. Over 288–628 (SKQQRIKMLI…STDQLNKIML (341 aa)) the chain is Cytoplasmic. The interval 294–379 (KMLILPPVPV…HQKSLNILGA (86 aa)) is required for JAK2 binding. Positions 297 to 305 (ILPPVPVPK) match the Box 1 motif motif. The short motif at 340–349 (DSWVEFIELD) is the UbE motif element. Phosphoserine is present on S341. Phosphotyrosine occurs at positions 483 and 585.

It belongs to the type I cytokine receptor family. Type 1 subfamily. On growth hormone (GH) binding, forms homodimers and binds JAK2 via a box 1-containing domain. In terms of processing, the soluble form (GHBP) is produced by phorbol ester-promoted proteolytic cleavage at the cell surface (shedding) by ADAM17/TACE. Shedding is inhibited by growth hormone (GH) binding to the receptor probably due to a conformational change in GHR rendering the receptor inaccessible to ADAM17. Post-translationally, on GH binding, phosphorylated on tyrosine residues in the cytoplasmic domain by JAK2. Ubiquitinated by the ECS(SOCS2) complex following ligand-binding and phosphorylation by JAK2, leading to its degradation by the proteasome. Regulation by the ECS(SOCS2) complex acts as a negative feedback loop of growth hormone receptor signaling. Ubiquitination is not sufficient for GHR internalization.

It localises to the cell membrane. It is found in the secreted. Functionally, receptor for pituitary gland growth hormone (GH1) involved in regulating postnatal body growth. On ligand binding, couples to the JAK2/STAT5 pathway. Its function is as follows. The soluble form (GHBP) acts as a reservoir of growth hormone in plasma and may be a modulator/inhibitor of GH signaling. The sequence is that of Growth hormone receptor (GHR) from Cavia porcellus (Guinea pig).